The primary structure comprises 203 residues: Small ribosomal subunit protein uS4c (203 aa).

The disordered stretch occupies residues 17–39 (TLPGLTTKKSNKLNRPGKDGNTD). Residues 92-164 (MRLDTLCFTL…IKNNQVREIP (73 aa)) enclose the S4 RNA-binding domain.

It belongs to the universal ribosomal protein uS4 family. Part of the 30S ribosomal subunit. Contacts protein S5. The interaction surface between S4 and S5 is involved in control of translational fidelity.

It localises to the plastid. The protein localises to the chloroplast. One of the primary rRNA binding proteins, it binds directly to 16S rRNA where it nucleates assembly of the body of the 30S subunit. Functionally, with S5 and S12 plays an important role in translational accuracy. In Phaeodactylum tricornutum (strain CCAP 1055/1), this protein is Small ribosomal subunit protein uS4c (rps4).